We begin with the raw amino-acid sequence, 452 residues long: 5'-nucleotidase domain-containing protein 1 (452 aa).

Residue aspartate 16 is the Nucleophile of the active site. Mg(2+) is bound by residues aspartate 16 and aspartate 18. The active-site Proton donor is the aspartate 18. An N6-acetyllysine modification is found at lysine 171. Residue aspartate 313 coordinates Mg(2+). A compositionally biased stretch (basic and acidic residues) spans glycine 339–lysine 361. Residues glycine 339 to leucine 365 are disordered.

Belongs to the 5'(3')-deoxyribonucleotidase family.

In Bos taurus (Bovine), this protein is 5'-nucleotidase domain-containing protein 1 (NT5DC1).